The sequence spans 97 residues: Putative membrane protein insertion efficiency factor (97 aa).

The interval 72-97 is disordered; sequence VPGAEPDQEQHQCTPLCNHHSEDHSQ.

It belongs to the UPF0161 family.

The protein resides in the cell inner membrane. In terms of biological role, could be involved in insertion of integral membrane proteins into the membrane. This is Putative membrane protein insertion efficiency factor from Alcanivorax borkumensis (strain ATCC 700651 / DSM 11573 / NCIMB 13689 / SK2).